Reading from the N-terminus, the 103-residue chain is Histone H4, major (103 aa).

Residues 1-12 show a composition bias toward gly residues; that stretch reads MAGGKGGKGMGK. A disordered region spans residues 1–29; it reads MAGGKGGKGMGKVGAKRHSKRSNKASIEG. K5, K8, K12, and K16 each carry N6-acetyllysine. Residues 14–23 are compositionally biased toward basic residues; that stretch reads GAKRHSKRSN. The DNA-binding element occupies 16 to 21; the sequence is KRHSKR.

The protein belongs to the histone H4 family. The nucleosome is a histone octamer containing two molecules each of H2A, H2B, H3 and H4 assembled in one H3-H4 heterotetramer and two H2A-H2B heterodimers. The octamer wraps approximately 147 bp of DNA.

Its subcellular location is the nucleus. It is found in the chromosome. Its function is as follows. Core component of nucleosome. Nucleosomes wrap and compact DNA into chromatin, limiting DNA accessibility to the cellular machineries which require DNA as a template. Histones thereby play a central role in transcription regulation, DNA repair, DNA replication and chromosomal stability. DNA accessibility is regulated via a complex set of post-translational modifications of histones, also called histone code, and nucleosome remodeling. The polypeptide is Histone H4, major (Tetrahymena pyriformis).